Reading from the N-terminus, the 282-residue chain is Globin-related protein glb-13 (282 aa).

Residues 1–46 are disordered; it reads MGQENSKCPHQSLAEKRYKVERPKTKKVSSGSATERCLSTQSDEKN. Residues 13–23 show a composition bias toward basic and acidic residues; that stretch reads LAEKRYKVERP. A compositionally biased stretch (polar residues) spans 28–41; sequence VSSGSATERCLSTQ. The region spanning 100–249 is the Globin domain; the sequence is FLTRRERILL…IISFMRRGFD (150 aa). The heme b site is built by His162 and His194.

This sequence belongs to the globin family.

Its function is as follows. Involved in oxidative stress resistance. This chain is Globin-related protein glb-13, found in Caenorhabditis elegans.